The chain runs to 230 residues: Flagellar L-ring protein (230 aa).

The first 16 residues, 1–16 (MYLVFGIIFTSVIVTS), serve as a signal peptide directing secretion. Cysteine 17 is lipidated: N-palmitoyl cysteine. Cysteine 17 is lipidated: S-diacylglycerol cysteine.

It belongs to the FlgH family. The basal body constitutes a major portion of the flagellar organelle and consists of four rings (L,P,S, and M) mounted on a central rod.

The protein localises to the cell outer membrane. It is found in the bacterial flagellum basal body. In terms of biological role, assembles around the rod to form the L-ring and probably protects the motor/basal body from shearing forces during rotation. The sequence is that of Flagellar L-ring protein from Bartonella bacilliformis (strain ATCC 35685 / KC583 / Herrer 020/F12,63).